Consider the following 458-residue polypeptide: Hyaluronidase conohyal-P1 (458 aa).

A signal peptide spans 1–18 (MRVVVVVTGLVVVVVATA). Positions 24 to 47 (HDVKSASSPLSSSSVYQGSSGDDC) are disordered. Positions 28–43 (SASSPLSSSSVYQGSS) are enriched in low complexity. A disulfide bond links C68 and C342. 2 N-linked (GlcNAc...) asparagine glycosylation sites follow: N106 and N141. E151 acts as the Proton donor in catalysis. N261, N337, and N359 each carry an N-linked (GlcNAc...) asparagine glycan. One can recognise an EGF-like domain in the interval 363-434 (VMADCSTTLC…VRPSRCHKQQ (72 aa)). Disulfide bonds link C367/C378, C372/C411, and C413/C422.

It belongs to the glycosyl hydrolase 56 family. As to expression, expressed by the venom duct.

Its subcellular location is the secreted. The catalysed reaction is Random hydrolysis of (1-&gt;4)-linkages between N-acetyl-beta-D-glucosamine and D-glucuronate residues in hyaluronate.. Its function is as follows. Hyaluronidase catalyzes the hydrolysis of hyaluronic acid (HA), an anionic, nonsulfated glycosaminoglycan distributed widely throughout connective, epithelial, and neural tissues. In venom, they are known to enhance diffusion of the venom by degrading the extracellular matrix. This chain is Hyaluronidase conohyal-P1, found in Conus purpurascens (Purple cone).